A 543-amino-acid chain; its full sequence is CTP synthase (543 aa).

The tract at residues 1-267 is amidoligase domain; it reads MKQTKYIFVT…LSPIAEILDL (267 aa). Residue Ser15 participates in CTP binding. Ser15 serves as a coordination point for UTP. ATP contacts are provided by residues 16–21 and Asp73; that span reads SLGKGI. Residues Asp73 and Glu141 each contribute to the Mg(2+) site. Residues 148–150, 188–193, and Lys224 each bind CTP; these read DIE and KTKPTQ. Residues 188 to 193 and Lys224 contribute to the UTP site; that span reads KTKPTQ. The region spanning 292 to 543 is the Glutamine amidotransferase type-1 domain; that stretch reads KIAFVGKYVD…IKAAINYEDN (252 aa). An L-glutamine-binding site is contributed by Gly354. Cys381 serves as the catalytic Nucleophile; for glutamine hydrolysis. Residues 382–385, Glu405, and Arg473 each bind L-glutamine; that span reads LGMQ. Catalysis depends on residues His516 and Glu518.

This sequence belongs to the CTP synthase family. As to quaternary structure, homotetramer.

The catalysed reaction is UTP + L-glutamine + ATP + H2O = CTP + L-glutamate + ADP + phosphate + 2 H(+). It catalyses the reaction L-glutamine + H2O = L-glutamate + NH4(+). The enzyme catalyses UTP + NH4(+) + ATP = CTP + ADP + phosphate + 2 H(+). It participates in pyrimidine metabolism; CTP biosynthesis via de novo pathway; CTP from UDP: step 2/2. Allosterically activated by GTP, when glutamine is the substrate; GTP has no effect on the reaction when ammonia is the substrate. The allosteric effector GTP functions by stabilizing the protein conformation that binds the tetrahedral intermediate(s) formed during glutamine hydrolysis. Inhibited by the product CTP, via allosteric rather than competitive inhibition. Functionally, catalyzes the ATP-dependent amination of UTP to CTP with either L-glutamine or ammonia as the source of nitrogen. Regulates intracellular CTP levels through interactions with the four ribonucleotide triphosphates. The sequence is that of CTP synthase from Campylobacter jejuni subsp. jejuni serotype O:23/36 (strain 81-176).